Reading from the N-terminus, the 423-residue chain is Glucoside xylosyltransferase 2 (423 aa).

At 1–6 (MRFRWK) the chain is on the cytoplasmic side. The chain crosses the membrane as a helical; Signal-anchor for type II membrane protein span at residues 7–26 (FFGSLLCVTGLLLVLYRQLG). Residues 27-423 (NVPQPPPGPA…RVVVHIRSDV (397 aa)) lie on the Lumenal side of the membrane. The segment at 60-85 (RRDARQGGKKKTNWNNVRAPEQKPNP) is disordered. N-linked (GlcNAc...) asparagine glycosylation is found at N215 and N256.

This sequence belongs to the glycosyltransferase 8 family.

The protein resides in the membrane. The enzyme catalyses 3-O-(beta-D-glucosyl)-L-seryl-[EGF-like domain protein] + UDP-alpha-D-xylose = 3-O-[alpha-D-xylosyl-(1-&gt;3)-beta-D-glucosyl]-L-seryl-[EGF-like domain protein] + UDP + H(+). Its function is as follows. Glycosyltransferase which elongates the O-linked glucose attached to EGF-like repeats in the extracellular domain of Notch proteins by catalyzing the addition of xylose. This chain is Glucoside xylosyltransferase 2 (gxylt2), found in Xenopus laevis (African clawed frog).